The sequence spans 405 residues: MRGQNRRGYRNIEGRLSLSSHSSHSSPRQTHVTNLRPAEIKVVQDVVDGCYVATDDVLNLSNFSKNTEFVERDMLMCLTKTRVMSVVLQHIGYKYPRISGISFSNNRLCHLDHLSSLSSISKFLKFLDLSHNQISSGEELKKLGTIPVETVFFEGNPVCEKFVQCAEYANFIQKTFPKCSNLDGMEVEPKPDHNRIEQIIPFRNGYYGSDEVRTLVEEFIITYYKIYDGADGQQTRKQLLDAYDTNNSTFTHTVVCLWDPIKFVMYPDSESYRMYLRTSHNVLNQEYFAANRASRISHGAMDIVVALSRLPATIHLMDTFVVDVFLVSATLLGFTLHGTFRDGPSAIKPENTEEHDNYFTRTFMVAPRGEGKVAIVSDQLFISSMSKRRGDQYRMLVETATDIDQ.

The tract at residues 1–33 (MRGQNRRGYRNIEGRLSLSSHSSHSSPRQTHVT) is disordered. The segment covering 16–26 (LSLSSHSSHSS) has biased composition (low complexity). In terms of domain architecture, RRM spans 26–94 (SPRQTHVTNL…SVVLQHIGYK (69 aa)). LRR repeat units follow at residues 97–118 (RISGISFSNNRLCHLDHLSSLS) and 123–144 (FLKFLDLSHNQISSGEELKKLG). The region spanning 215-382 (LVEEFIITYY…VAIVSDQLFI (168 aa)) is the NTF2 domain.

The protein belongs to the NXF family.

It localises to the nucleus. In terms of biological role, involved in the export of cellular mRNA to the cytoplasm. Plays a role in the nuclear retention of unspliced mRNAs. The protein is Nuclear RNA export factor 2 of Caenorhabditis elegans.